A 961-amino-acid chain; its full sequence is Phosphofurin acidic cluster sorting protein 1 (961 aa).

The span at 1–19 (MAERGGAGGGPGGAGGGSS) shows a compositional bias: gly residues. Disordered regions lie at residues 1-70 (MAER…SSST) and 76-95 (VAVA…RTPA). The residue at position 2 (Ala2) is an N-acetylalanine. The segment covering 20-30 (QRGSGVAQSPQ) has biased composition (low complexity). Position 28 is a phosphoserine (Ser28). The segment covering 31 to 46 (QQPPQQPSQPQQPTPP) has biased composition (pro residues). Phosphothreonine is present on Thr44. The segment covering 51–70 (ATSSSSSTSAAAASSSSSST) has biased composition (low complexity). Tyr249 carries the phosphotyrosine modification. Residues 260-271 (GIKSKLSDRSPD) are compositionally biased toward basic and acidic residues. Disordered stretches follow at residues 260–297 (GIKS…LHGQ) and 375–426 (NPSD…GKDT). Residues 274 to 291 (NYSEEEEESFSSEQEGSD) show a composition bias toward acidic residues. A coiled-coil region spans residues 351–375 (HVSREQIREVEEDLDELYDSLEMYN). A phosphoserine mark is found at Ser377 and Ser379. The segment covering 404–426 (MSQSSSQTEIGSLNSKGSLGKDT) has biased composition (polar residues). Residues Ser428 and Ser493 each carry the phosphoserine modification. Disordered regions lie at residues 475 to 540 (EKVK…HSTQ) and 758 to 802 (SPST…SMSS). A Phosphothreonine modification is found at Thr502. Ser517, Ser526, Ser527, Ser529, and Ser532 each carry phosphoserine. The span at 768-802 (SPVVSLTVPSTSPPSSSGLSRDATATPPSSPSMSS) shows a compositional bias: low complexity.

Belongs to the PACS family. In terms of assembly, associates with AP-1 and AP-3 but not with AP-2 complexes. Interacts with FURIN. Forms a ternary complex with furin and AP-1. Interacts with PKD2 (via acidic region). Interacts with SORL1. Interacts with WDR37.

Its subcellular location is the golgi apparatus. The protein resides in the trans-Golgi network. Its function is as follows. Coat protein that is involved in the localization of trans-Golgi network (TGN) membrane proteins that contain acidic cluster sorting motifs. Controls the endosome-to-Golgi trafficking of furin and mannose-6-phosphate receptor by connecting the acidic-cluster-containing cytoplasmic domain of these molecules with the adapter-protein complex-1 (AP-1) of endosomal clathrin-coated membrane pits. Required for normal ER Ca2+ handling in lymphocytes. Together with WDR37, it plays an essential role in lymphocyte development, quiescence and survival. Required for stabilizing peripheral lymphocyte populations. The protein is Phosphofurin acidic cluster sorting protein 1 (Pacs1) of Rattus norvegicus (Rat).